A 257-amino-acid chain; its full sequence is Phosphatidylglycerol--prolipoprotein diacylglyceryl transferase (257 aa).

7 helical membrane-spanning segments follow: residues 13-33, 49-69, 88-108, 123-143, 152-172, 186-202, and 223-243; these read FGPI…AVGG, FLLN…RLMF, IYEG…AGLY, FAVV…IFNH, FFFG…FLLI, YQFW…RGVF, and IGLF…AYWM. Arg136 is an a 1,2-diacyl-sn-glycero-3-phospho-(1'-sn-glycerol) binding site.

It belongs to the Lgt family.

The protein resides in the cell membrane. The catalysed reaction is L-cysteinyl-[prolipoprotein] + a 1,2-diacyl-sn-glycero-3-phospho-(1'-sn-glycerol) = an S-1,2-diacyl-sn-glyceryl-L-cysteinyl-[prolipoprotein] + sn-glycerol 1-phosphate + H(+). The protein operates within protein modification; lipoprotein biosynthesis (diacylglyceryl transfer). Catalyzes the transfer of the diacylglyceryl group from phosphatidylglycerol to the sulfhydryl group of the N-terminal cysteine of a prolipoprotein, the first step in the formation of mature lipoproteins. The protein is Phosphatidylglycerol--prolipoprotein diacylglyceryl transferase of Caldanaerobacter subterraneus subsp. tengcongensis (strain DSM 15242 / JCM 11007 / NBRC 100824 / MB4) (Thermoanaerobacter tengcongensis).